The primary structure comprises 379 residues: Cytochrome b (379 aa).

Helical transmembrane passes span 33-53 (FGSL…FLAM), 77-98 (WLIR…FIHV), 113-133 (WNIG…GYVL), and 178-198 (FFAF…VHLL). The heme b site is built by His-83 and His-97. Positions 182 and 196 each coordinate heme b. His-201 lines the a ubiquinone pocket. 4 consecutive transmembrane segments (helical) span residues 226-246 (IKDL…TLFF), 288-308 (LGGV…PLLN), 320-340 (VTQV…WIGG), and 347-367 (FTMI…ILIP).

It belongs to the cytochrome b family. The cytochrome bc1 complex contains 11 subunits: 3 respiratory subunits (MT-CYB, CYC1 and UQCRFS1), 2 core proteins (UQCRC1 and UQCRC2) and 6 low-molecular weight proteins (UQCRH/QCR6, UQCRB/QCR7, UQCRQ/QCR8, UQCR10/QCR9, UQCR11/QCR10 and a cleavage product of UQCRFS1). This cytochrome bc1 complex then forms a dimer. The cofactor is heme b.

It localises to the mitochondrion inner membrane. Its function is as follows. Component of the ubiquinol-cytochrome c reductase complex (complex III or cytochrome b-c1 complex) that is part of the mitochondrial respiratory chain. The b-c1 complex mediates electron transfer from ubiquinol to cytochrome c. Contributes to the generation of a proton gradient across the mitochondrial membrane that is then used for ATP synthesis. This Akodon subfuscus (Puno grass mouse) protein is Cytochrome b (MT-CYB).